A 260-amino-acid chain; its full sequence is Snake venom serine protease homolog 2A (260 aa).

A signal peptide spans 1–18 (MVLIRVLANLLILQLSYA). The propeptide occupies 19–24 (QKSSEL). The region spanning 25–251 (IIGGDECNIN…HLDWIKSIIA (227 aa)) is the Peptidase S1 domain. 6 disulfide bridges follow: Cys-31–Cys-165, Cys-52–Cys-68, Cys-100–Cys-258, Cys-144–Cys-212, Cys-176–Cys-191, and Cys-202–Cys-227. Asn-83, Asn-123, and Asn-124 each carry an N-linked (GlcNAc...) asparagine glycan.

This sequence belongs to the peptidase S1 family. Snake venom subfamily. Expressed by the venom gland.

It localises to the secreted. Functionally, snake venom serine protease homolog that may act in the hemostasis system of the prey. The protein is Snake venom serine protease homolog 2A (TLG2A) of Craspedocephalus gramineus (Bamboo pit viper).